The following is a 490-amino-acid chain: UDP-glycosyltransferase 84A1 (490 aa).

His30 acts as the Proton acceptor in catalysis. His30 is a binding site for an anthocyanidin. 6 residues coordinate UDP-alpha-D-glucose: Gln358, His373, Trp376, Asn377, Ser378, and Glu381. Gly396 is a binding site for an anthocyanidin. UDP-alpha-D-glucose-binding residues include Asp397 and Gln398.

It belongs to the UDP-glycosyltransferase family. Expressed in roots, flowers and siliques.

It catalyses the reaction (E)-4-coumarate + UDP-alpha-D-glucose = 4-O-(beta-D-glucosyl)-trans-4-coumarate + UDP + H(+). The catalysed reaction is (E)-ferulate + UDP-alpha-D-glucose = 1-O-[(E)-feruloyl]-beta-D-glucose + UDP. It carries out the reaction (E)-caffeate + UDP-alpha-D-glucose = 1-O-[(E)-caffeoyl]-beta-D-glucose + UDP. The enzyme catalyses (E)-sinapate + UDP-alpha-D-glucose = 1-O-(trans-sinapoyl)-beta-D-glucose + UDP. It catalyses the reaction (E)-cinnamate + UDP-alpha-D-glucose = 1-O-(trans-cinnamoyl)-beta-D-glucose + UDP. Its function is as follows. UDP-glucosyltransferase that forms glucose esters with phenylpropanoids. Glucosylates 4-coumarate, ferulate, caffeate, sinapate and cinnamate. Can glucosylate the phytotoxic xenobiotic compound 2,4,5-trichlorophenol (TCP). This is UDP-glycosyltransferase 84A1 from Arabidopsis thaliana (Mouse-ear cress).